Reading from the N-terminus, the 353-residue chain is D-alanine--D-alanine ligase A (353 aa).

Residues 141 to 346 enclose the ATP-grasp domain; the sequence is KRLVNEAGLS…YPEIINRLVA (206 aa). 169 to 224 serves as a coordination point for ATP; the sequence is EQALGLPIFIKPARQGSSVGVHKVVTEADYQAAMSDGFIYDDKLLAEEFIQAREVE. Mg(2+) contacts are provided by Asp-300, Glu-313, and Asn-315.

This sequence belongs to the D-alanine--D-alanine ligase family. The cofactor is Mg(2+). Mn(2+) serves as cofactor.

It localises to the cytoplasm. It catalyses the reaction 2 D-alanine + ATP = D-alanyl-D-alanine + ADP + phosphate + H(+). Its pathway is cell wall biogenesis; peptidoglycan biosynthesis. Its function is as follows. Cell wall formation. This is D-alanine--D-alanine ligase A from Brucella melitensis biotype 1 (strain ATCC 23456 / CCUG 17765 / NCTC 10094 / 16M).